Here is a 118-residue protein sequence, read N- to C-terminus: Large ribosomal subunit protein bL20 (118 aa).

Belongs to the bacterial ribosomal protein bL20 family.

Binds directly to 23S ribosomal RNA and is necessary for the in vitro assembly process of the 50S ribosomal subunit. It is not involved in the protein synthesizing functions of that subunit. In Aquifex aeolicus (strain VF5), this protein is Large ribosomal subunit protein bL20 (rplT).